A 336-amino-acid polypeptide reads, in one-letter code: tRNA N6-adenosine threonylcarbamoyltransferase (336 aa).

Residues histidine 108 and histidine 112 each coordinate Fe cation. Substrate-binding positions include 129–133 (LISGG), aspartate 161, glutamate 178, and serine 258. Fe cation is bound at residue aspartate 286.

The protein belongs to the KAE1 / TsaD family. Fe(2+) serves as cofactor.

It localises to the cytoplasm. The catalysed reaction is L-threonylcarbamoyladenylate + adenosine(37) in tRNA = N(6)-L-threonylcarbamoyladenosine(37) in tRNA + AMP + H(+). In terms of biological role, required for the formation of a threonylcarbamoyl group on adenosine at position 37 (t(6)A37) in tRNAs that read codons beginning with adenine. Is probably involved in the transfer of the threonylcarbamoyl moiety of threonylcarbamoyl-AMP (TC-AMP) to the N6 group of A37. The chain is tRNA N6-adenosine threonylcarbamoyltransferase from Pyrobaculum neutrophilum (strain DSM 2338 / JCM 9278 / NBRC 100436 / V24Sta) (Thermoproteus neutrophilus).